The chain runs to 486 residues: Retrograde regulation protein 3 (486 aa).

The 9aaTAD 1 motif lies at E27–T35. Composition is skewed to polar residues over residues N75 to T94 and S101 to G130. The tract at residues N75–G130 is disordered. Phosphoserine is present on residues S81, S123, and S142. At T150 the chain carries Phosphothreonine. Positions S189–T197 match the 9aaTAD 2 motif. A phosphoserine mark is found at S227, S236, and S241. The segment at R243–L274 is disordered. A compositionally biased stretch (polar residues) spans S246–E263. Position 269 is a phosphoserine (S269). The bHLH domain occupies R285–L344. Positions A374 to E395 are disordered.

As to quaternary structure, binds DNA as a heterodimer with RTG1.

The protein resides in the nucleus. Transcription factor that regulates CIT2 gene expression. Binds to two identical sites oriented as inverted repeats 28 bp apart in a regulatory upstream activation sequence element (UASR) in the CIT2 promoter. The core binding site is 5'-GGTCAC-3'. This Saccharomyces cerevisiae (strain ATCC 204508 / S288c) (Baker's yeast) protein is Retrograde regulation protein 3 (RTG3).